We begin with the raw amino-acid sequence, 150 residues long: Transcriptional regulator MraZ (150 aa).

2 SpoVT-AbrB domains span residues 8 to 55 (FINN…GISH) and 84 to 127 (AVQL…QPQN).

It belongs to the MraZ family. In terms of assembly, forms oligomers.

Its subcellular location is the cytoplasm. It localises to the nucleoid. This is Transcriptional regulator MraZ from Rickettsia bellii (strain OSU 85-389).